The following is a 1098-amino-acid chain: PAN2-PAN3 deadenylation complex catalytic subunit PAN2 (1098 aa).

WD repeat units lie at residues 19–58 (ASKD…PFQL), 150–190 (TGFD…SVKS), 253–293 (PFPN…KLNV), and 300–338 (PASP…NFVN). Positions 340 to 466 (PAPLEEQDIP…SIFHLKSPTS (127 aa)) are linker. Residues 417–442 (RNISQPYQSLREPPGSNSNAPRFISE) form a disordered region. The USP domain maps to 466-839 (SVPHCYSRLQ…KPVIIVYSEP (374 aa)). The 174-residue stretch at 894–1067 (IAIDAEFVVS…EDAYTALMLF (174 aa)) folds into the Exonuclease domain. The a divalent metal cation site is built by Asp897, Glu899, Asp1006, and Asp1059.

This sequence belongs to the peptidase C19 family. PAN2 subfamily. In terms of assembly, forms a heterotrimer with an asymmetric homodimer of the regulatory subunit PAN3 to form the poly(A)-nuclease (PAN) deadenylation complex. A divalent metal cation is required as a cofactor.

The protein resides in the cytoplasm. The catalysed reaction is Exonucleolytic cleavage of poly(A) to 5'-AMP.. Positively regulated by the regulatory subunit PAN3. Functionally, catalytic subunit of the poly(A)-nuclease (PAN) deadenylation complex, one of two cytoplasmic mRNA deadenylases involved in mRNA turnover. PAN specifically shortens poly(A) tails of RNA and the activity is stimulated by poly(A)-binding protein PAB1. PAN deadenylation is followed by rapid degradation of the shortened mRNA tails by the CCR4-NOT complex. Deadenylated mRNAs are then degraded by two alternative mechanisms, namely exosome-mediated 3'-5' exonucleolytic degradation, or deadenylation-dependent mRNA decaping and subsequent 5'-3' exonucleolytic degradation by XRN1. May also be involved in post-transcriptional maturation of mRNA poly(A) tails. This chain is PAN2-PAN3 deadenylation complex catalytic subunit PAN2, found in Meyerozyma guilliermondii (strain ATCC 6260 / CBS 566 / DSM 6381 / JCM 1539 / NBRC 10279 / NRRL Y-324) (Yeast).